Consider the following 357-residue polypeptide: Sulfate/thiosulfate import ATP-binding protein CysA (357 aa).

The 235-residue stretch at 3–237 (IQIQGVSKQY…PASPFVYDFL (235 aa)) folds into the ABC transporter domain. 35 to 42 (GPSGSGKT) serves as a coordination point for ATP.

The protein belongs to the ABC transporter superfamily. Sulfate/tungstate importer (TC 3.A.1.6) family. As to quaternary structure, the complex is composed of two ATP-binding proteins (CysA), two transmembrane proteins (CysT and CysW) and a solute-binding protein (CysP).

It localises to the cell membrane. It catalyses the reaction sulfate(out) + ATP + H2O = sulfate(in) + ADP + phosphate + H(+). It carries out the reaction thiosulfate(out) + ATP + H2O = thiosulfate(in) + ADP + phosphate + H(+). Functionally, part of the ABC transporter complex CysAWTP involved in sulfate/thiosulfate import. Responsible for energy coupling to the transport system. The sequence is that of Sulfate/thiosulfate import ATP-binding protein CysA from Bacillus cereus (strain ATCC 14579 / DSM 31 / CCUG 7414 / JCM 2152 / NBRC 15305 / NCIMB 9373 / NCTC 2599 / NRRL B-3711).